The primary structure comprises 237 residues: LexA repressor (237 aa).

Residues phenylalanine 26–threonine 46 constitute a DNA-binding region (H-T-H motif). Active-site for autocatalytic cleavage activity residues include serine 158 and lysine 196.

The protein belongs to the peptidase S24 family. As to quaternary structure, homodimer.

The catalysed reaction is Hydrolysis of Ala-|-Gly bond in repressor LexA.. Represses a number of genes involved in the response to DNA damage (SOS response), including recA and lexA. In the presence of single-stranded DNA, RecA interacts with LexA causing an autocatalytic cleavage which disrupts the DNA-binding part of LexA, leading to derepression of the SOS regulon and eventually DNA repair. In Rhodospirillum centenum (strain ATCC 51521 / SW), this protein is LexA repressor.